The following is a 901-amino-acid chain: MLIKLLTKVFGSRNDRTLRRMRKVVNIINAMEPEMEKLSDEELKGKTAEFRARLEKGEVLENLIPEAFAVVREASKRVFGMRHFDVQLLGGMVLNERCIAEMRTGEGKTLTATLPAYLNALTGKGVHVVTVNDYLAQRDAENNRPLFEFLGLTVGINLPGMPAPAKREAYAADITYGTNNEYGFDYLRDNMAFSPEERVQRKLHYALVDEVDSILIDEARTPLIISGPAEDSSEMYKRVNKIIPHLIRQEKEDSETFQGEGHFSVDEKSRQVNLTERGLVLIEELLVKEGIMDEGESLYSPANIMLMHHVTAALRAHALFTRDVDYIVKDGEVIIVDEHTGRTMQGRRWSDGLHQAVEAKEGVQIQNENQTLASITFQNYFRLYEKLAGMTGTADTEAFEFSSIYKLDTVVVPTNRPMIRKDLPDLVYMTEAEKIQAIIEDIKERTAKGQPVLVGTISIEKSELVSNELTKAGIKHNVLNAKFHANEAAIVAQAGYPAAVTIATNMAGRGTDIVLGGSWQAEVAALENPTAEQIEKIKADWQVRHDAVLEAGGLHIIGTERHESRRIDNQLRGRSGRQGDAGSSRFYLSMEDALMRIFASDRVSGMMRKLGMKPGEAIEHPWVTKAIANAQRKVESRNFDIRKQLLEYDDVANDQRRAIYSQRNELLDVSDVSETINSIREDVFKATIDAYIPPQSLEEMWDIPGLQERLKNDFDLDLPIAEWLDKEPELHEETLRERILAQSIEVYQRKEEVVGAEMMRHFEKGVMLQTLDSLWKEHLAAMDYLRQGIHLRGYAQKDPKQEYKRESFSMFAAMLESLKYEVIGTLSKVQVRMPEEVEELEQQRRMEAERLAQMQQLSHQDDDSAAAAALAAQTGERKVGRNDPCPCGSGKKYKQCHGRLQ.

ATP is bound by residues Gln87, Gly105–Thr109, and Asp512. The interval His859–Gln901 is disordered. Cys885, Cys887, Cys896, and His897 together coordinate Zn(2+). Positions Lys891–Gln901 are enriched in basic residues.

Belongs to the SecA family. Monomer and homodimer. Part of the essential Sec protein translocation apparatus which comprises SecA, SecYEG and auxiliary proteins SecDF-YajC and YidC. The cofactor is Zn(2+).

It localises to the cell inner membrane. The protein resides in the cytoplasm. It catalyses the reaction ATP + H2O + cellular proteinSide 1 = ADP + phosphate + cellular proteinSide 2.. Functionally, part of the Sec protein translocase complex. Interacts with the SecYEG preprotein conducting channel. Has a central role in coupling the hydrolysis of ATP to the transfer of proteins into and across the cell membrane, serving both as a receptor for the preprotein-SecB complex and as an ATP-driven molecular motor driving the stepwise translocation of polypeptide chains across the membrane. The chain is Protein translocase subunit SecA from Escherichia coli (strain 55989 / EAEC).